The following is a 549-amino-acid chain: Cytoplasmic trehalase (549 aa).

Residues Arg-168, Trp-175–Asp-176, Asn-212, Arg-221–Gln-223, Arg-292–Glu-294, and Gly-324 each bind substrate. Active-site proton donor/acceptor residues include Asp-326 and Glu-509. Glu-525 serves as a coordination point for substrate.

It belongs to the glycosyl hydrolase 37 family. As to quaternary structure, monomer.

It is found in the cytoplasm. The enzyme catalyses alpha,alpha-trehalose + H2O = alpha-D-glucose + beta-D-glucose. It functions in the pathway glycan degradation; trehalose degradation; D-glucose from alpha,alpha-trehalose: step 1/1. Hydrolyzes trehalose to glucose. Could be involved, in cells returning to low osmolarity conditions, in the utilization of the accumulated cytoplasmic trehalose, which was synthesized in response to high osmolarity. In Salmonella typhi, this protein is Cytoplasmic trehalase.